Reading from the N-terminus, the 396-residue chain is MIIEPRMRGFICLTAHPTGCEQNIKNQIAYIKSKGHIEGAKRVLVIGASTGFGLASRITSAFGCDASTIGVFFEKPASQGKTASPGWYNSAAFENEAKKAGLYAKSINGDAFSNDVKQQTINLIKKDLGQIDLIIYSLASPVRLHPTTGVLHRSVLKPIGATFTNKTVDFHSGKVSEISIAPCEGDDIENTVTVMGGEDWSMWIDALKKENLLANNATTIAYSYIGPEVTEAVYRKGTIGKAKDHLEATAFSITDSLADLGGKAYVSVNKALVTQASSAIPVIPLYISLLYKIMKSEGIHEGCIEQMQRLYAQRLYTGNEIPTDDKGRIRIDDWEMRADVQEKVAKLWLEATTETLPEIGDLEGYRSDFHNLFGFGFEGVEYKADTNEMVNVSSII.

NAD(+) is bound by residues 47–52 (GASTGF), 73–74 (FE), 110–111 (DA), and 138–139 (LA). Substrate is bound at residue Y224. Y234 (proton donor) is an active-site residue. Residues K243 and 272–274 (LVT) each bind NAD(+).

This sequence belongs to the TER reductase family. Monomer.

It catalyses the reaction a 2,3-saturated acyl-[ACP] + NAD(+) = a (2E)-enoyl-[ACP] + NADH + H(+). The protein operates within lipid metabolism; fatty acid biosynthesis. Its function is as follows. Involved in the final reduction of the elongation cycle of fatty acid synthesis (FAS II). Catalyzes the reduction of a carbon-carbon double bond in an enoyl moiety that is covalently linked to an acyl carrier protein (ACP). In Flavobacterium psychrophilum (strain ATCC 49511 / DSM 21280 / CIP 103535 / JIP02/86), this protein is Enoyl-[acyl-carrier-protein] reductase [NADH].